Reading from the N-terminus, the 468-residue chain is Glutamine synthetase (468 aa).

The GS beta-grasp domain maps to 11–96 (HDVKWIDLRF…LVCDIIEPST (86 aa)). A GS catalytic domain is found at 104 to 468 (PRAIAHRAEE…PLEYELYYSC (365 aa)). Positions 129 and 131 each coordinate Mg(2+). Glu-207 is a binding site for ATP. Residues Glu-212 and Glu-220 each contribute to the Mg(2+) site. Residues 264–265 (NG) and Gly-265 contribute to the L-glutamate site. His-269 provides a ligand contact to Mg(2+). ATP is bound by residues 271-273 (HMS) and Ser-273. The L-glutamate site is built by Arg-321, Glu-327, and Arg-339. ATP-binding residues include Arg-339, Arg-344, and Arg-352. Glu-357 provides a ligand contact to Mg(2+). Arg-359 contributes to the L-glutamate binding site. Residue Tyr-397 is modified to O-AMP-tyrosine.

The protein belongs to the glutamine synthetase family. As to quaternary structure, oligomer of 12 subunits arranged in the form of two hexagons. Mg(2+) serves as cofactor. The cofactor is Mn(2+).

It catalyses the reaction L-glutamate + NH4(+) + ATP = L-glutamine + ADP + phosphate + H(+). Its activity is regulated as follows. When cellular nitrogen levels are high, the C-terminal adenylyl transferase (AT) of GlnE inhibits GlnA by covalent transfer of an adenylyl group from ATP to Tyr-397. Conversely, when nitrogen levels are low, the N-terminal adenylyl removase (AR) of GlnE activates GlnA by removing the adenylyl group by phosphorolysis. The fully adenylated enzyme complex is inactive. Catalyzes the formation of glutamine from glutamate and ammonia. In vitro, can also use hydroxylamine, methylamine and ethylamine, with 32%, 7% and 1% activity compared to ammonia, respectively. This chain is Glutamine synthetase, found in Pseudomonas taetrolens.